Here is a 356-residue protein sequence, read N- to C-terminus: Protein-glutamate methylesterase/protein-glutamine glutaminase 2 (356 aa).

A Response regulatory domain is found at 6–123 (KVLIVDDSAL…KQFLEESSIR (118 aa)). Asp-57 is modified (4-aspartylphosphate). One can recognise a CheB-type methylesterase domain in the interval 165-356 (VQRTEKVVVV…AAAIVKACNS (192 aa)). Active-site residues include Ser-177, His-203, and Asp-299.

It belongs to the CheB family. Phosphorylated by CheA. Phosphorylation of the N-terminal regulatory domain activates the methylesterase activity.

It is found in the cytoplasm. The catalysed reaction is [protein]-L-glutamate 5-O-methyl ester + H2O = L-glutamyl-[protein] + methanol + H(+). It carries out the reaction L-glutaminyl-[protein] + H2O = L-glutamyl-[protein] + NH4(+). Functionally, involved in chemotaxis. Part of a chemotaxis signal transduction system that modulates chemotaxis in response to various stimuli. Catalyzes the demethylation of specific methylglutamate residues introduced into the chemoreceptors (methyl-accepting chemotaxis proteins or MCP) by CheR. Also mediates the irreversible deamidation of specific glutamine residues to glutamic acid. This is Protein-glutamate methylesterase/protein-glutamine glutaminase 2 from Oleidesulfovibrio alaskensis (strain ATCC BAA-1058 / DSM 17464 / G20) (Desulfovibrio alaskensis).